The following is a 133-amino-acid chain: Hydrogenase maturation factor HypA (133 aa).

H2 lines the Ni(2+) pocket. Zn(2+) is bound by residues C73, C75, C105, and C108.

Belongs to the HypA/HybF family.

Its function is as follows. Involved in the maturation of [NiFe] hydrogenases. Required for nickel insertion into the metal center of the hydrogenase. The polypeptide is Hydrogenase maturation factor HypA (Methanosarcina acetivorans (strain ATCC 35395 / DSM 2834 / JCM 12185 / C2A)).